Here is a 461-residue protein sequence, read N- to C-terminus: Asparagine--tRNA ligase (461 aa).

This sequence belongs to the class-II aminoacyl-tRNA synthetase family. As to quaternary structure, homodimer.

The protein localises to the cytoplasm. The enzyme catalyses tRNA(Asn) + L-asparagine + ATP = L-asparaginyl-tRNA(Asn) + AMP + diphosphate + H(+). In Nitratidesulfovibrio vulgaris (strain DP4) (Desulfovibrio vulgaris), this protein is Asparagine--tRNA ligase.